Consider the following 132-residue polypeptide: Small ribosomal subunit protein uS8 (132 aa).

The protein belongs to the universal ribosomal protein uS8 family. As to quaternary structure, part of the 30S ribosomal subunit. Contacts proteins S5 and S12.

In terms of biological role, one of the primary rRNA binding proteins, it binds directly to 16S rRNA central domain where it helps coordinate assembly of the platform of the 30S subunit. In Caulobacter sp. (strain K31), this protein is Small ribosomal subunit protein uS8.